Consider the following 146-residue polypeptide: VHLTAEEKAAVTALWGKVNVDEVGGEALGRLLVVYPWTQRFFDSFGDLSSPDAVMGNPKVKAHGKKVLNSFSEGLKNLDNLKGTFAKLSELHCDKLHVDPENFKLLGNVLVCVLAHHFGKEFTPQVQAAYQKVVAGVATALAHKYH.

An N-acetylvaline modification is found at valine 1. The Globin domain maps to 2–146 (HLTAEEKAAV…VATALAHKYH (145 aa)). Threonine 12 carries the phosphothreonine modification. Position 44 is a phosphoserine (serine 44). Lysine 59 carries the post-translational modification N6-acetyllysine. Heme b is bound at residue histidine 63. Residue lysine 82 is modified to N6-acetyllysine. A heme b-binding site is contributed by histidine 92. Position 93 is an S-nitrosocysteine (cysteine 93). Lysine 144 carries the N6-acetyllysine modification.

The protein belongs to the globin family. As to quaternary structure, heterotetramer of two alpha chains and two beta chains. In terms of tissue distribution, red blood cells.

In terms of biological role, involved in oxygen transport from the lung to the various peripheral tissues. The polypeptide is Hemoglobin subunit beta (HBB) (Mustela lutreola (European mink)).